A 161-amino-acid polypeptide reads, in one-letter code: Transcriptional regulator MraZ (161 aa).

SpoVT-AbrB domains are found at residues 7-69 (KELH…EPDV) and 98-141 (LDVV…EPER).

This sequence belongs to the MraZ family. As to quaternary structure, forms oligomers.

The protein localises to the cytoplasm. It localises to the nucleoid. The protein is Transcriptional regulator MraZ of Chlorobium limicola (strain DSM 245 / NBRC 103803 / 6330).